Reading from the N-terminus, the 88-residue chain is DNA-directed RNA polymerase subunit omega (88 aa).

Belongs to the RNA polymerase subunit omega family. The RNAP catalytic core consists of 2 alpha, 1 beta, 1 beta' and 1 omega subunit. When a sigma factor is associated with the core the holoenzyme is formed, which can initiate transcription.

It carries out the reaction RNA(n) + a ribonucleoside 5'-triphosphate = RNA(n+1) + diphosphate. In terms of biological role, promotes RNA polymerase assembly. Latches the N- and C-terminal regions of the beta' subunit thereby facilitating its interaction with the beta and alpha subunits. In Haemophilus influenzae (strain PittEE), this protein is DNA-directed RNA polymerase subunit omega.